Here is a 320-residue protein sequence, read N- to C-terminus: Acetyl-coenzyme A carboxylase carboxyl transferase subunit beta (320 aa).

Positions Leu-25–Asp-294 constitute a CoA carboxyltransferase N-terminal domain. 4 residues coordinate Zn(2+): Cys-29, Cys-32, Cys-48, and Cys-51. The C4-type zinc-finger motif lies at Cys-29–Cys-51. A disordered region spans residues Leu-290 to Ser-320.

This sequence belongs to the AccD/PCCB family. As to quaternary structure, acetyl-CoA carboxylase is a heterohexamer composed of biotin carboxyl carrier protein (AccB), biotin carboxylase (AccC) and two subunits each of ACCase subunit alpha (AccA) and ACCase subunit beta (AccD). Zn(2+) is required as a cofactor.

Its subcellular location is the cytoplasm. It catalyses the reaction N(6)-carboxybiotinyl-L-lysyl-[protein] + acetyl-CoA = N(6)-biotinyl-L-lysyl-[protein] + malonyl-CoA. The protein operates within lipid metabolism; malonyl-CoA biosynthesis; malonyl-CoA from acetyl-CoA: step 1/1. Functionally, component of the acetyl coenzyme A carboxylase (ACC) complex. Biotin carboxylase (BC) catalyzes the carboxylation of biotin on its carrier protein (BCCP) and then the CO(2) group is transferred by the transcarboxylase to acetyl-CoA to form malonyl-CoA. The protein is Acetyl-coenzyme A carboxylase carboxyl transferase subunit beta of Dinoroseobacter shibae (strain DSM 16493 / NCIMB 14021 / DFL 12).